A 370-amino-acid chain; its full sequence is Lipoyl synthase, mitochondrial (370 aa).

The [4Fe-4S] cluster site is built by cysteine 100, cysteine 105, cysteine 111, cysteine 131, cysteine 135, cysteine 138, and serine 346. The 220-residue stretch at 116–335 (DKSRATATIM…KEVAEKLGFL (220 aa)) folds into the Radical SAM core domain.

It belongs to the radical SAM superfamily. Lipoyl synthase family. [4Fe-4S] cluster serves as cofactor.

Its subcellular location is the mitochondrion. The catalysed reaction is [[Fe-S] cluster scaffold protein carrying a second [4Fe-4S](2+) cluster] + N(6)-octanoyl-L-lysyl-[protein] + 2 oxidized [2Fe-2S]-[ferredoxin] + 2 S-adenosyl-L-methionine + 4 H(+) = [[Fe-S] cluster scaffold protein] + N(6)-[(R)-dihydrolipoyl]-L-lysyl-[protein] + 4 Fe(3+) + 2 hydrogen sulfide + 2 5'-deoxyadenosine + 2 L-methionine + 2 reduced [2Fe-2S]-[ferredoxin]. It participates in protein modification; protein lipoylation via endogenous pathway; protein N(6)-(lipoyl)lysine from octanoyl-[acyl-carrier-protein]: step 2/2. Its function is as follows. Catalyzes the radical-mediated insertion of two sulfur atoms into the C-6 and C-8 positions of the octanoyl moiety bound to the lipoyl domains of lipoate-dependent enzymes, thereby converting the octanoylated domains into lipoylated derivatives. The protein is Lipoyl synthase, mitochondrial (lip5) of Schizosaccharomyces pombe (strain 972 / ATCC 24843) (Fission yeast).